The primary structure comprises 805 residues: Muscarinic acetylcholine receptor DM1 (805 aa).

Topologically, residues 1–100 are extracellular; the sequence is MEPVMSLALA…GFETKGPRYS (100 aa). Residues 27-43 show a composition bias toward low complexity; that stretch reads TSTTTTTTTTTSTTTTT. The tract at residues 27–47 is disordered; that stretch reads TSTTTTTTTTTSTTTTTASPA. 3 N-linked (GlcNAc...) asparagine glycosylation sites follow: Asn-65, Asn-84, and Asn-87. A helical transmembrane segment spans residues 101 to 121; sequence LASMVVMGFVAAILSTVTVAG. Over 122-141 the chain is Cytoplasmic; that stretch reads NVMVMISFKIDKQLQTISNY. A helical membrane pass occupies residues 142 to 162; the sequence is FLFSLAIADFAIGAISMPLFA. Topologically, residues 163-177 are extracellular; it reads VTTILGYWPLGPIVC. The chain crosses the membrane as a helical span at residues 178-198; the sequence is DTWLALDYLASNASVLNLLII. The Cytoplasmic segment spans residues 199–220; that stretch reads SFDRYFSVTRPLTYRAKRTTNR. Residues 221–241 form a helical membrane-spanning segment; sequence AAVMIGAAWGISLLLWPPWIY. Topologically, residues 242 to 266 are extracellular; it reads SWPYIEGKRTVPKDECYIQFIETNQ. The helical transmembrane segment at 267–287 threads the bilayer; the sequence is YITFGTALAAFYFPVTIMCFL. The Cytoplasmic segment spans residues 288-718; that stretch reads YWRIWRETKK…KRQESKAAKT (431 aa). 3 disordered regions span residues 302 to 322, 340 to 359, and 507 to 530; these read LPNL…SDEN, GNDH…DAES, and GNGN…VNGN. Basic and acidic residues-rich tracts occupy residues 308–318 and 341–353; these read GKKDSSKRSNS and NDHD…RSES. The segment covering 507 to 525 has biased composition (low complexity); that stretch reads GNGNGAINNNNNASHNGNG. Residues 719–739 traverse the membrane as a helical segment; it reads LSAILLSFIITWTPYNILVLI. The Extracellular portion of the chain corresponds to 740-752; the sequence is KPLTTCSDCIPTE. The chain crosses the membrane as a helical span at residues 753–773; the sequence is LWDFFYALCYINSTINPMCYA. At 774–805 the chain is on the cytoplasmic side; sequence LCNATFRRTYVRILTCKWHTRNREGMVRGVYN.

The protein belongs to the G-protein coupled receptor 1 family. Muscarinic acetylcholine receptor subfamily. Intense staining in the glomeruli of the antennal lobes, the region of the nervous system containing terminals of antennal olfactory sensory neurons and mechanosensory neurons. Also a discrete group of neurosecretory cells in the pars intercerebralis of the brain.

The protein localises to the cell membrane. Its subcellular location is the postsynaptic cell membrane. The muscarinic acetylcholine receptor mediates various cellular responses, including inhibition of adenylate cyclase, breakdown of phosphoinositides and modulation of potassium channels through the action of G proteins. Primary transducing effect is Pi turnover. May have a role in the processing of olfactory and mechanosensory signals; regulation of neurosecretion. This chain is Muscarinic acetylcholine receptor DM1 (mAChR-A), found in Drosophila melanogaster (Fruit fly).